The following is a 252-amino-acid chain: Geranylgeranylglyceryl phosphate synthase (252 aa).

The Mg(2+) site is built by aspartate 22 and serine 51. Sn-glycerol 1-phosphate-binding positions include 170–176, 201–202, and 223–224; these read YFEAGSG, GG, and GS.

This sequence belongs to the GGGP/HepGP synthase family. Group II subfamily. Mg(2+) serves as cofactor.

It localises to the cytoplasm. It catalyses the reaction sn-glycerol 1-phosphate + (2E,6E,10E)-geranylgeranyl diphosphate = sn-3-O-(geranylgeranyl)glycerol 1-phosphate + diphosphate. It participates in membrane lipid metabolism; glycerophospholipid metabolism. Functionally, prenyltransferase that catalyzes the transfer of the geranylgeranyl moiety of geranylgeranyl diphosphate (GGPP) to the C3 hydroxyl of sn-glycerol-1-phosphate (G1P). This reaction is the first ether-bond-formation step in the biosynthesis of archaeal membrane lipids. In Thermoplasma volcanium (strain ATCC 51530 / DSM 4299 / JCM 9571 / NBRC 15438 / GSS1), this protein is Geranylgeranylglyceryl phosphate synthase.